Consider the following 89-residue polypeptide: NADH-ubiquinone oxidoreductase chain 4L (89 aa).

The next 3 helical transmembrane spans lie at Met1 to Asn21, Ile22 to Val42, and Ile57 to Phe77.

The protein belongs to the complex I subunit 4L family.

The protein resides in the mitochondrion membrane. The enzyme catalyses a ubiquinone + NADH + 5 H(+)(in) = a ubiquinol + NAD(+) + 4 H(+)(out). Functionally, core subunit of the mitochondrial membrane respiratory chain NADH dehydrogenase (Complex I) that is believed to belong to the minimal assembly required for catalysis. Complex I functions in the transfer of electrons from NADH to the respiratory chain. The immediate electron acceptor for the enzyme is believed to be ubiquinone. This chain is NADH-ubiquinone oxidoreductase chain 4L (ND4L), found in Hypocrea jecorina (Trichoderma reesei).